The primary structure comprises 525 residues: Ribonuclease Y (525 aa).

The chain crosses the membrane as a helical span at residues 3-23 (IFFISLVLIVLASVVFFVGGF). The 86-residue stretch at 215 to 300 (ALSVVHIQSD…KAYEDAKKEI (86 aa)) folds into the KH domain. Residues 341-433 (LLQHSREVAM…VDAANVISLS (93 aa)) form the HD domain.

Belongs to the RNase Y family.

The protein resides in the cell membrane. Its function is as follows. Endoribonuclease that initiates mRNA decay. This is Ribonuclease Y from Chlorobium phaeobacteroides (strain DSM 266 / SMG 266 / 2430).